Reading from the N-terminus, the 64-residue chain is Micrurotoxin 1 (64 aa).

Disulfide bonds link Cys-3–Cys-24, Cys-6–Cys-11, Cys-17–Cys-41, Cys-45–Cys-57, and Cys-58–Cys-63.

This sequence belongs to the three-finger toxin family. Ancestral subfamily. In terms of tissue distribution, expressed by the venom gland.

Its subcellular location is the secreted. Allosteric modulator of the GABA(A) receptor (GABR), possibly increasing receptor affinity for the agonist, thus enhancing receptor opening and macroscopic desensitization. In vivo, intracerebroventricular injection into mice results in periods of reduced basal activity, followed by bursts of intense seizures and death. The protein is Micrurotoxin 1 of Micrurus mipartitus (Red-tailed coral snake).